Reading from the N-terminus, the 555-residue chain is MFAHPFDHSFNDLFNQYVNMDTSSTDANKDVSFPSEFDQLFPLDSFSTDCGDQSPVISTVQHNSQPAQDWGKDLWSLSQNTGCSTNQDSFSFQDSTQPSTALDLSIGLEADATGHSQASVPRSTPSTPPATPGPKVKGGLFTPKTIRHHRESNDRRGLLRKQSFSPGLMRSSQLQKGSCRMAYPEAWAQRLQNFTIRSSDECLPLSPPPSDILVQQENVKHTPVQMRNAAEGFQGSTELPQQIDSGYITQSPAIPMPSPSANALAGQQQRYLSQTGTSALTPSPPSARDVFSSPHSSDPQSMPSWHSESLNTPAFQYTPELSDHQTWWSPMPSEVAQRHASYQQMIASPAPQRPVQAAANHGDFLQGGLMIQLDPTQFDISSSFPSSTIPTTANNHDNLAYNVEAHAPQKYVDASSFNTQAVPHPSRSPSISPKADTSPRHGSANRDGMAMKNAPRRPHGRKLSGQSTSTPKPVKTPNSLSTSPRGGKSVTVSFVNFTANDRQKILTGVAPSGSSKTKARREQEARDRRRKLSEAALQAVRKAGGDVEALEAVLC.

Disordered stretches follow at residues 113–171 (TGHS…LMRS), 250–310 (QSPA…SESL), 419–488 (TQAV…RGGK), and 508–531 (GVAP…RRRK). Polar residues-rich tracts occupy residues 162–171 (QSFSPGLMRS), 259–281 (PSAN…SALT), 293–310 (SPHS…SESL), 419–431 (TQAV…SPSI), and 464–488 (SGQS…RGGK).

It belongs to the wetA family.

Functionally, brlA, abaA and wetA are pivotal regulators of conidiophore development and conidium maturation. They act individually and together to regulate their own expression and that of numerous other sporulation-specific genes. Responsible for activating a set of genes whose products make up the final two conidial wall layers or direct their assembly and, through this activity, is responsible for acquisition of spore dormancy. This Emericella nidulans (strain FGSC A4 / ATCC 38163 / CBS 112.46 / NRRL 194 / M139) (Aspergillus nidulans) protein is Developmental regulatory protein wetA.